The following is a 235-amino-acid chain: MGRAFEYRRASKEARWDKMSKLFPKLAKAIQVAAKEGGTDPDMNPKLRSAIATAKANNMPKDNIDAAIKRASGKDSADIKNIHYEGKAAHGALVIVECMSDNPTRTVANVKAIFSKNGGEVLQNGSLGFMFTRKAVFHLEKFAGDLEELELDLIDAGLEELEQNEEELVISGDYTAFGELSSAIETKGLVLKKAGLEYIPNNPVSFSEEQLSDIEKLLDKLEDDDDVQAVYTNID.

The protein belongs to the TACO1 family.

The protein localises to the cytoplasm. The sequence is that of Probable transcriptional regulatory protein CJJ81176_1187 from Campylobacter jejuni subsp. jejuni serotype O:23/36 (strain 81-176).